The chain runs to 43 residues: Protein PsbN (43 aa).

A helical transmembrane segment spans residues 5–27; sequence NLVTISISCLLVSLTGYAIYTSF.

It belongs to the PsbN family.

Its subcellular location is the plastid. The protein resides in the chloroplast thylakoid membrane. Functionally, may play a role in photosystem I and II biogenesis. The chain is Protein PsbN from Gnetum gnemon (Spanish joint-fir).